Here is a 619-residue protein sequence, read N- to C-terminus: Sorting nexin-41 (619 aa).

A disordered region spans residues 1–95 (MWNDEDNNPY…ELVPRRKPGG (95 aa)). Residues 108–224 (PELPILITEA…WRFLDPNSSW (117 aa)) enclose the PX domain. A 1,2-diacyl-sn-glycero-3-phospho-(1D-myo-inositol-3-phosphate) is bound by residues arginine 142, serine 144, lysine 168, and arginine 191. Positions 444-510 (YLSSSQQIQP…GSPSHKKAAS (67 aa)) are disordered. Positions 454 to 467 (PRREPPAQHRRDGS) are enriched in basic and acidic residues.

This sequence belongs to the sorting nexin family.

It is found in the endosome membrane. The protein resides in the endomembrane system. May be required for cytoplasm to vacuole transport (Cvt) and pexophagy. In Neurospora crassa (strain ATCC 24698 / 74-OR23-1A / CBS 708.71 / DSM 1257 / FGSC 987), this protein is Sorting nexin-41 (vsp-6).